The chain runs to 944 residues: ATP-dependent helicase fft1 (944 aa).

Disordered stretches follow at residues 89-109 (AAYD…ESSN) and 174-246 (SAQK…NSIP). Residues 92–108 (DPHDQPPERDVSLKESS) show a composition bias toward basic and acidic residues. The span at 174 to 184 (SAQKLNNQPIE) shows a compositional bias: polar residues. The segment covering 186 to 203 (SSVDKENAKRKRYVEEGT) has biased composition (basic and acidic residues). Positions 217–227 (LSDEETNEDDL) are enriched in acidic residues. Over residues 230–246 (QSPTACTTDANIDNSIP) the composition is skewed to polar residues. The 167-residue stretch at 426–592 (CLMYKAKLSG…ISLLAFMLPK (167 aa)) folds into the Helicase ATP-binding domain. 439–446 (DEMGLGKT) provides a ligand contact to ATP. Positions 543–546 (DEGH) match the DEGH box motif. One can recognise a Helicase C-terminal domain in the interval 766-923 (KVKKLCSLLK…DSEKIQKEIS (158 aa)).

Belongs to the SNF2/RAD54 helicase family.

The protein resides in the nucleus. It catalyses the reaction ATP + H2O = ADP + phosphate + H(+). DNA helicase that possesses intrinsic ATP-dependent nucleosome-remodeling activity and is required for heterochromatin organization. This chain is ATP-dependent helicase fft1 (fft1), found in Schizosaccharomyces pombe (strain 972 / ATCC 24843) (Fission yeast).